A 726-amino-acid polypeptide reads, in one-letter code: Cyclic nucleotide-gated ion channel 2 (726 aa).

The Cytoplasmic portion of the chain corresponds to 1 to 127 (MPSHPNFIFR…SKRVQRWNRA (127 aa)). The segment at 26–46 (IDENSNLQINGGDSSSSGSDE) is disordered. Over residues 36-45 (GGDSSSSGSD) the composition is skewed to low complexity. A helical membrane pass occupies residues 128-148 (LLLARGMALAVDPLFFYALSI). The Extracellular portion of the chain corresponds to 149 to 162 (GRTTGPACLYMDGA). A helical transmembrane segment spans residues 163-183 (FAAVVTVLRTCLDAVHLWHVW). Topologically, residues 184–219 (LQFRLAYVSRESLVVGCGKLVWDPRAIASHYARSLT) are cytoplasmic. Residues 220–240 (GFWFDVIVILPVPQAVFWLVV) traverse the membrane as a helical segment. The Extracellular portion of the chain corresponds to 241 to 254 (PKLIREEKVKLIMT). Residues 255 to 275 (ILLLIFLFQFLPKIYHCICLM) form a helical membrane-spanning segment. At 276-282 (RRMQKVT) the chain is on the cytoplasmic side. A helical transmembrane segment spans residues 283–303 (GYIFGTIWWGFALNLIAYFIA). The Extracellular portion of the chain corresponds to 304-424 (SHVAGGCWYV…ANDLEPTSNW (121 aa)). Residues 425–445 (LEVIFSIVMVLSGLLLFTLLI) form a helical membrane-spanning segment. The Cytoplasmic portion of the chain corresponds to 446 to 726 (GNIQVFLHAV…MSIRPHDHLE (281 aa)). Residues 531–661 (LFRG…ARYY) and Asp-600 each bind a nucleoside 3',5'-cyclic phosphate. Residues 645–661 (FRYKFANERLKRTARYY) are calmodulin-binding. The IQ domain maps to 666-695 (RTWAAVNIQMAWRRRRKRTRGENIGGSMSP).

It belongs to the cyclic nucleotide-gated cation channel (TC 1.A.1.5) family. Homotetramer or heterotetramer (Potential). Binds calmodulin-1/4 with a higher affinity than calmodulin-2/3/5. In terms of tissue distribution, expressed in the whole plant but only weakly in roots. Strongly expressed in the expanded cotyledons of 14-day-old seedlings and detected later in leaves after the transition to flowering. Also detected in flowers during organ senescence and in the dehiscence zone of siliques.

It localises to the cell membrane. Acts as a cyclic nucleotide-gated ion channel. Permeable to potassium and calcium in a cyclic nucleotide-dependent fashion (cAMP or cGMP). Could also transport lithium, cesium and rubium and displays a strong selectivity against sodium. Seems to directly participate in pathogen-induced calcium influx. May function in homeostasis, re-establishing ionic balance after defense action and/or other stimuli. Could mediate the initiation of the developmentally regulated cell death programs. The protein is Cyclic nucleotide-gated ion channel 2 (CNGC2) of Arabidopsis thaliana (Mouse-ear cress).